Here is a 255-residue protein sequence, read N- to C-terminus: Diphthine synthase (255 aa).

Residues Leu9, Asp85, Val88, 113-114 (SI), Leu164, Ala207, and His232 each bind S-adenosyl-L-methionine.

The protein belongs to the diphthine synthase family. Homodimer.

The catalysed reaction is 2-[(3S)-amino-3-carboxypropyl]-L-histidyl-[translation elongation factor 2] + 3 S-adenosyl-L-methionine = diphthine-[translation elongation factor 2] + 3 S-adenosyl-L-homocysteine + 3 H(+). The protein operates within protein modification; peptidyl-diphthamide biosynthesis. Functionally, S-adenosyl-L-methionine-dependent methyltransferase that catalyzes the trimethylation of the amino group of the modified target histidine residue in translation elongation factor 2 (EF-2), to form an intermediate called diphthine. The three successive methylation reactions represent the second step of diphthamide biosynthesis. The sequence is that of Diphthine synthase from Methanococcus maripaludis (strain DSM 14266 / JCM 13030 / NBRC 101832 / S2 / LL).